The primary structure comprises 162 residues: Large ribosomal subunit protein bL17 (162 aa).

Positions 126 to 162 are disordered; it reads ATAKKATRTRRSKKSAAATEAPAAPAAETTEEAPKAE. The segment covering 130 to 139 has biased composition (basic residues); the sequence is KATRTRRSKK. A compositionally biased stretch (low complexity) spans 140–153; it reads SAAATEAPAAPAAE.

Belongs to the bacterial ribosomal protein bL17 family. In terms of assembly, part of the 50S ribosomal subunit. Contacts protein L32.

This chain is Large ribosomal subunit protein bL17, found in Phocaeicola vulgatus (strain ATCC 8482 / DSM 1447 / JCM 5826 / CCUG 4940 / NBRC 14291 / NCTC 11154) (Bacteroides vulgatus).